The chain runs to 292 residues: tRNA pseudouridine synthase B (292 aa).

The active-site Nucleophile is the Asp-40.

This sequence belongs to the pseudouridine synthase TruB family. Type 1 subfamily.

It carries out the reaction uridine(55) in tRNA = pseudouridine(55) in tRNA. Responsible for synthesis of pseudouridine from uracil-55 in the psi GC loop of transfer RNAs. This Mycoplasma capricolum subsp. capricolum (strain California kid / ATCC 27343 / NCTC 10154) protein is tRNA pseudouridine synthase B.